The sequence spans 158 residues: Phosphopantetheine adenylyltransferase (158 aa).

T10 is a substrate binding site. ATP-binding positions include 10 to 11 (TF) and H18. Residues K42, L74, and R88 each contribute to the substrate site. Residues 89 to 91 (GLR), E99, and 124 to 130 (NSFISST) contribute to the ATP site.

This sequence belongs to the bacterial CoaD family. In terms of assembly, homohexamer. Mg(2+) serves as cofactor.

The protein resides in the cytoplasm. It catalyses the reaction (R)-4'-phosphopantetheine + ATP + H(+) = 3'-dephospho-CoA + diphosphate. Its pathway is cofactor biosynthesis; coenzyme A biosynthesis; CoA from (R)-pantothenate: step 4/5. Its function is as follows. Reversibly transfers an adenylyl group from ATP to 4'-phosphopantetheine, yielding dephospho-CoA (dPCoA) and pyrophosphate. In Shewanella loihica (strain ATCC BAA-1088 / PV-4), this protein is Phosphopantetheine adenylyltransferase.